Reading from the N-terminus, the 508-residue chain is GMP synthase [glutamine-hydrolyzing] (508 aa).

The 189-residue stretch at 1–189 (MILVLDFGSQ…ALLVCGCEKT (189 aa)) folds into the Glutamine amidotransferase type-1 domain. The active-site Nucleophile is the cysteine 78. Catalysis depends on residues histidine 163 and glutamate 165. A GMPS ATP-PPase domain is found at 190–383 (WGMQHFAQRE…LGVSQDFLMR (194 aa)). 217 to 223 (SGGVDST) contacts ATP.

As to quaternary structure, homodimer.

The enzyme catalyses XMP + L-glutamine + ATP + H2O = GMP + L-glutamate + AMP + diphosphate + 2 H(+). It functions in the pathway purine metabolism; GMP biosynthesis; GMP from XMP (L-Gln route): step 1/1. In terms of biological role, catalyzes the synthesis of GMP from XMP. The polypeptide is GMP synthase [glutamine-hydrolyzing] (guaA) (Helicobacter pylori (strain J99 / ATCC 700824) (Campylobacter pylori J99)).